We begin with the raw amino-acid sequence, 92 residues long: Islet amyloid polypeptide (92 aa).

The N-terminal stretch at 1–22 is a signal peptide; sequence MHISKLPAALLIFSVALNHLKA. Residues 23–34 constitute a propeptide that is removed on maturation; sequence TPVRSGTNHQMD. Cysteine 38 and cysteine 43 form a disulfide bridge. Tyrosine 73 carries the post-translational modification Tyrosine amide. The propeptide occupies 77 to 92; that stretch reads SAAEIPDGDSLDLFLL.

Belongs to the calcitonin family. In terms of assembly, can form homodimers. Interacts with IDE and INS. Interaction with INS inhibits homodimerization and fibril formation.

It is found in the secreted. Its function is as follows. Amylin/IAPP is a glucoregulatory peptide hormone that plays an important role in the regulation of energy homeostasis. Selectively inhibits insulin-stimulated glucose utilization and glycogen deposition in muscle, while not affecting adipocyte glucose metabolism. IAPP function is mediated by the CALCR-RAMPs (AMYRs) receptor complexes. Amylin can also bind CALCR receptor in the absence of RAMPs, although it is more selective for AMYRs. The protein is Islet amyloid polypeptide (IAPP) of Mesocricetus auratus (Golden hamster).